The chain runs to 361 residues: Aromatic amino acid aminotransferase (361 aa).

K221 is modified (N6-(pyridoxal phosphate)lysine).

The protein belongs to the class-II pyridoxal-phosphate-dependent aminotransferase family. In terms of assembly, homodimer. The cofactor is pyridoxal 5'-phosphate.

It catalyses the reaction an aromatic L-alpha-amino acid + 2-oxoglutarate = an aromatic oxo-acid + L-glutamate. Aminotransferase that catalyzes the conversion of aromatic amino acids and 2-oxoglutarate into corresponding aromatic oxo acids and L-glutamate. This Mycobacterium ulcerans (strain Agy99) protein is Aromatic amino acid aminotransferase.